The chain runs to 628 residues: 1-deoxy-D-xylulose-5-phosphate synthase (628 aa).

Residues His72 and 113 to 115 (GHS) each bind thiamine diphosphate. Asp144 contributes to the Mg(2+) binding site. Residues 145–146 (GA), Asn173, Tyr284, and Glu363 contribute to the thiamine diphosphate site. Asn173 serves as a coordination point for Mg(2+).

This sequence belongs to the transketolase family. DXPS subfamily. Homodimer. Mg(2+) is required as a cofactor. The cofactor is thiamine diphosphate.

The enzyme catalyses D-glyceraldehyde 3-phosphate + pyruvate + H(+) = 1-deoxy-D-xylulose 5-phosphate + CO2. It functions in the pathway metabolic intermediate biosynthesis; 1-deoxy-D-xylulose 5-phosphate biosynthesis; 1-deoxy-D-xylulose 5-phosphate from D-glyceraldehyde 3-phosphate and pyruvate: step 1/1. Functionally, catalyzes the acyloin condensation reaction between C atoms 2 and 3 of pyruvate and glyceraldehyde 3-phosphate to yield 1-deoxy-D-xylulose-5-phosphate (DXP). The sequence is that of 1-deoxy-D-xylulose-5-phosphate synthase from Brevibacillus brevis (strain 47 / JCM 6285 / NBRC 100599).